We begin with the raw amino-acid sequence, 114 residues long: T cell receptor beta variable 6-5 (114 aa).

Positions 1–21 (MSIGLLCCAALSLLWAGPVNA) are cleaved as a signal peptide. Residues 22-114 (GVTQTPKFQV…TSVYFCASSY (93 aa)) form the Ig-like domain. C42 and C110 are joined by a disulfide. An N-linked (GlcNAc...) asparagine glycan is attached at N84.

In terms of assembly, alpha-beta TR is a heterodimer composed of an alpha and beta chain; disulfide-linked. The alpha-beta TR is associated with the transmembrane signaling CD3 coreceptor proteins to form the TR-CD3 (TcR or TCR). The assembly of alpha-beta TR heterodimers with CD3 occurs in the endoplasmic reticulum where a single alpha-beta TR heterodimer associates with one CD3D-CD3E heterodimer, one CD3G-CD3E heterodimer and one CD247 homodimer forming a stable octameric structure. CD3D-CD3E and CD3G-CD3E heterodimers preferentially associate with TR alpha and TR beta chains, respectively. The association of the CD247 homodimer is the last step of TcR assembly in the endoplasmic reticulum and is required for transport to the cell surface.

It is found in the cell membrane. V region of the variable domain of T cell receptor (TR) beta chain that participates in the antigen recognition. Alpha-beta T cell receptors are antigen specific receptors which are essential to the immune response and are present on the cell surface of T lymphocytes. Recognize peptide-major histocompatibility (MH) (pMH) complexes that are displayed by antigen presenting cells (APC), a prerequisite for efficient T cell adaptive immunity against pathogens. Binding of alpha-beta TR to pMH complex initiates TR-CD3 clustering on the cell surface and intracellular activation of LCK that phosphorylates the ITAM motifs of CD3G, CD3D, CD3E and CD247 enabling the recruitment of ZAP70. In turn ZAP70 phosphorylates LAT, which recruits numerous signaling molecules to form the LAT signalosome. The LAT signalosome propagates signal branching to three major signaling pathways, the calcium, the mitogen-activated protein kinase (MAPK) kinase and the nuclear factor NF-kappa-B (NF-kB) pathways, leading to the mobilization of transcription factors that are critical for gene expression and essential for T cell growth and differentiation. The T cell repertoire is generated in the thymus, by V-(D)-J rearrangement. This repertoire is then shaped by intrathymic selection events to generate a peripheral T cell pool of self-MH restricted, non-autoaggressive T cells. Post-thymic interaction of alpha-beta TR with the pMH complexes shapes TR structural and functional avidity. The sequence is that of T cell receptor beta variable 6-5 from Homo sapiens (Human).